The primary structure comprises 156 residues: Small ribosomal subunit protein uS7 (156 aa).

Belongs to the universal ribosomal protein uS7 family. As to quaternary structure, part of the 30S ribosomal subunit. Contacts proteins S9 and S11.

Functionally, one of the primary rRNA binding proteins, it binds directly to 16S rRNA where it nucleates assembly of the head domain of the 30S subunit. Is located at the subunit interface close to the decoding center, probably blocks exit of the E-site tRNA. This chain is Small ribosomal subunit protein uS7, found in Neisseria gonorrhoeae (strain ATCC 700825 / FA 1090).